Consider the following 342-residue polypeptide: Isopentenyl-diphosphate delta-isomerase (342 aa).

11–12 (RK) contacts substrate. FMN is bound by residues S68, 69 to 71 (SMT), S99, and N128. Residue 99–101 (SQR) coordinates substrate. Residue Q162 participates in substrate binding. Residue E163 participates in Mg(2+) binding. FMN-binding positions include K194, S219, T224, 275-277 (GVR), and 296-297 (AK).

The protein belongs to the IPP isomerase type 2 family. As to quaternary structure, homooctamer. Dimer of tetramers. FMN serves as cofactor. NADPH is required as a cofactor. It depends on Mg(2+) as a cofactor.

The protein resides in the cytoplasm. It catalyses the reaction isopentenyl diphosphate = dimethylallyl diphosphate. Functionally, involved in the biosynthesis of isoprenoids. Catalyzes the 1,3-allylic rearrangement of the homoallylic substrate isopentenyl (IPP) to its allylic isomer, dimethylallyl diphosphate (DMAPP). This chain is Isopentenyl-diphosphate delta-isomerase, found in Legionella pneumophila (strain Paris).